Here is a 614-residue protein sequence, read N- to C-terminus: DNA double-strand break repair protein Mre11 (614 aa).

D12, H14, D53, and N88 together coordinate Mn(2+). Catalysis depends on H89, which acts as the Proton donor. The Mn(2+) site is built by H158, D189, and H191. Disordered regions lie at residues 393–434 (ASPI…SPDI) and 487–614 (ALKK…GDYL). The span at 411–425 (PVSSADSVSAVSPES) shows a compositional bias: low complexity. Composition is skewed to basic and acidic residues over residues 487–502 (ALKK…REAP), 535–558 (VPEK…KETG), and 568–591 (GSEK…EKPV).

This sequence belongs to the MRE11/RAD32 family. In terms of assembly, homodimer. Forms a heterotetramer composed of two Mre11 subunits and two Rad50 subunits. The cofactor is Mn(2+).

Its activity is regulated as follows. Nuclease activity is regulated by Rad50. Functionally, part of the Rad50/Mre11 complex, which is involved in the early steps of DNA double-strand break (DSB) repair. The complex may facilitate opening of the processed DNA ends to aid in the recruitment of HerA and NurA. Mre11 binds to DSB ends and has both double-stranded 3'-5' exonuclease activity and single-stranded endonuclease activity. In Methanosarcina acetivorans (strain ATCC 35395 / DSM 2834 / JCM 12185 / C2A), this protein is DNA double-strand break repair protein Mre11.